The chain runs to 98 residues: MMCGAPSATQPATAETQAIADKVKSQLEEKENKKFPVFKALEFKSQLVAGKNYFIKVQVDEDDFVHIRVFESLPHENKPVALTSYQTNKGRHDELTYF.

Residue Met1 is modified to N-acetylmethionine. The short motif at 46 to 50 (QLVAG) is the Secondary area of contact element.

Belongs to the cystatin family. Able to form dimers stabilized by noncovalent forces.

Its subcellular location is the cytoplasm. In terms of biological role, this is an intracellular thiol proteinase inhibitor. This is Cystatin-B (CSTB) from Ovis aries (Sheep).